The chain runs to 548 residues: Probable malate:quinone oxidoreductase (548 aa).

Residues Asp521–Leu548 are disordered. Over residues Val539 to Leu548 the composition is skewed to basic and acidic residues.

Belongs to the MQO family. FAD is required as a cofactor.

The catalysed reaction is (S)-malate + a quinone = a quinol + oxaloacetate. Its pathway is carbohydrate metabolism; tricarboxylic acid cycle; oxaloacetate from (S)-malate (quinone route): step 1/1. In Escherichia coli (strain ATCC 8739 / DSM 1576 / NBRC 3972 / NCIMB 8545 / WDCM 00012 / Crooks), this protein is Probable malate:quinone oxidoreductase.